The following is a 114-amino-acid chain: MSETATLPLRFTDSAASKVKNLIADEENPNLKLRVYITGGGCSGFQYGFTFDDKVNEDDFTIEKQGVALVVDPMSLQYLVGGSVDYSEGLEGSRFIVTNPNAKTTCGCGSSFSI.

Iron-sulfur cluster is bound by residues C42, C106, and C108.

This sequence belongs to the HesB/IscA family. Homodimer. Requires iron-sulfur cluster as cofactor.

Required for insertion of 4Fe-4S clusters for at least IspG. The sequence is that of Iron-sulfur cluster insertion protein ErpA from Sodalis glossinidius (strain morsitans).